Consider the following 193-residue polypeptide: Copper-binding lipoprotein NosL (193 aa).

An N-terminal signal peptide occupies residues 1–19 (MRTRLRFVLVAAALALLSA). Cys20 carries N-palmitoyl cysteine lipidation. Cys20 carries the S-diacylglycerol cysteine lipid modification.

The protein belongs to the NosL family. In terms of assembly, monomer. Apo-NosL can form homodimers.

The protein localises to the cell membrane. Functionally, may act as a metallochaperone involved in nitrous oxide reductase assembly. Specifically binds Cu(+). The protein is Copper-binding lipoprotein NosL of Achromobacter cycloclastes.